Here is a 409-residue protein sequence, read N- to C-terminus: Outer membrane protein assembly factor BamB (409 aa).

Positions 1 to 34 are cleaved as a signal peptide; sequence MAGNILLLILDYVFHAGSRTLRVCILSLLILLSG. Cysteine 35 carries N-palmitoyl cysteine lipidation. Cysteine 35 is lipidated: S-diacylglycerol cysteine.

The protein belongs to the BamB family. In terms of assembly, part of the Bam complex.

The protein localises to the cell outer membrane. Part of the outer membrane protein assembly complex, which is involved in assembly and insertion of beta-barrel proteins into the outer membrane. This Nitrosomonas eutropha (strain DSM 101675 / C91 / Nm57) protein is Outer membrane protein assembly factor BamB.